Here is a 92-residue protein sequence, read N- to C-terminus: MPRSLKKGPFVDEHLLSKVDAQNDKGTKQVIKTWSRRSTILPDFIGHTFAVHDGRKHVPVFIDDSMVGHKLGEFAPTKTFKGHVKDDKKGRR.

It belongs to the universal ribosomal protein uS19 family.

In terms of biological role, protein S19 forms a complex with S13 that binds strongly to the 16S ribosomal RNA. The chain is Small ribosomal subunit protein uS19 from Corynebacterium kroppenstedtii (strain DSM 44385 / JCM 11950 / CIP 105744 / CCUG 35717).